A 217-amino-acid chain; its full sequence is Cytidylate kinase (217 aa).

An ATP-binding site is contributed by 10-18; the sequence is GPAGAGKST.

It belongs to the cytidylate kinase family. Type 1 subfamily.

It localises to the cytoplasm. It catalyses the reaction CMP + ATP = CDP + ADP. It carries out the reaction dCMP + ATP = dCDP + ADP. The chain is Cytidylate kinase from Alkaliphilus oremlandii (strain OhILAs) (Clostridium oremlandii (strain OhILAs)).